The sequence spans 768 residues: Cullin-3-A (768 aa).

Residues 677-698 (VAAKQGESDPERKETRQKVDDD) form a disordered region. Positions 682-698 (GESDPERKETRQKVDDD) are enriched in basic and acidic residues. Residues 698–760 (DRKHEIEAAI…REYLARTPED (63 aa)) form the Cullin neddylation domain. A Glycyl lysine isopeptide (Lys-Gly) (interchain with G-Cter in NEDD8) cross-link involves residue Lys712.

This sequence belongs to the cullin family. In terms of assembly, component of multiple BCR (BTB-CUL3-RBX1) E3 ubiquitin-protein ligase complexes formed of cul3, rbx1 and a variable BTB domain-containing protein acting as both, adapter to cullin and substrate recognition subunit. Interacts with btbd6. Post-translationally, neddylated. Attachment of NEDD8 is required for the E3 ubiquitin-protein ligase activity of the SCF-like complex.

Its subcellular location is the nucleus. It functions in the pathway protein modification; protein ubiquitination. Functionally, probable core component of cullin-based SCF-like E3 ubiquitin-protein ligase complexes which mediate the ubiquitination and subsequent proteasomal degradation of target proteins. The E3 ubiquitin-protein ligase activity of the complex is dependent on the neddylation of the cullin subunit. Involved in ER-Golgi transport by regulating the size of COPII coats, thereby playing a key role in collagen export, which is required for embryonic stem (ES) cells division. May play a role in the regulation of mittotic entry via ubiquitination of aurka. The polypeptide is Cullin-3-A (cul3a) (Xenopus laevis (African clawed frog)).